Reading from the N-terminus, the 607-residue chain is MSSGLRAADFPRWKRHIAEELRRRDRLQRQAFEEIILQYTKLLEKSDLHSVLTQKLQAEKHDMPNRHEISPGHDGAWNDSQLQEMAQLRIKHQEELTELHKKRGELAQLVIDLNNQMQQKDKEIQMNEAKISEYLQTISDLETNCLDLRTKLQDLEVANQTLKDEYDALQITFTALEEKLRKTTEENQELVTRWMAEKAQEANRLNAENEKDSRRRQARLQKELAEAAKEPLPVEQDDDIEVIVDETSDHTEETSPVRAVSRAATKRLSQPAGGLLDSITNIFGRRSVSSIPVPQDIMDTHPASGKDVRVPTTASYVFDAHDGEVNAVQFSPGSRLLATGGMDRRVKLWEAFGDKCEFKGSLSGSNAGITSIEFDSAGAYLLAASNDFASRIWTVDDYRLRHTLTGHSGKVLSAKFLLDNARIVSGSHDRTLKLWDLRSKVCIKTVFAGSSCNDIVCTEQCVMSGHFDKKIRFWDIRSESVVREMELLGKITALDLNPERTELLSCSRDDLLKVIDLRTNAVKQTFSAPGFKCGSDWTRVVFSPDGSYVAAGSAEGSLYVWSVLTGKVEKVLSKQHSSSINAVAWAPSGLHVVSVDKGSRAVLWAQP.

The interaction with ATG5 stretch occupies residues 13–43 (WKRHIAEELRRRDRLQRQAFEEIILQYTKLL). Positions 79 to 230 (DSQLQEMAQL…QKELAEAAKE (152 aa)) form a coiled coil. A Phosphoserine modification is found at serine 139. The tract at residues 207-230 (AENEKDSRRRQARLQKELAEAAKE) is WIPI2-binding. The segment at 230-242 (EPLPVEQDDDIEV) is RB1CC1-binding. 2 positions are modified to phosphoserine: serine 269 and serine 287. A Caspase cleavage motif is present at residues 296-299 (DIMD). 7 WD repeats span residues 320-359 (AHDG…CEFK), 364-403 (GSNA…LRHT), 406-445 (GHSG…CIKT), 447-484 (FAGS…VVRE), 486-525 (ELLG…VKQT), 532-573 (KCGS…KVLS), and 575-607 (QHSS…WAQP).

It belongs to the WD repeat ATG16 family. In terms of assembly, homodimer. Homooligomer. Heterooligomer with ATG16L2. Interacts with WIPI1. Interacts with WIPI2. Interacts with RB1CC1; the interaction is required for ULK1 complex-dependent autophagy. Interacts with ATG5. Part of the minor complex composed of 4 sets of ATG12-ATG5 and ATG16L1 (400 kDa); this complex interacts with ATG3 leading to disruption of ATG7 interaction and promotion of ATG8-like proteins lipidation. Part of the major complex composed of 8 sets of ATG12-ATG5 and ATG16L1 (800 kDa). Interacts with RAB33B (GTP- and GDP-bound forms); the complex consists of a tetramer where two RAB33B molecules bind independently one molecule of the ATG16L1 homodimer; the interaction promotes ATG12-ATG5-ATG16L1 complex recruitment to phagophores. Interacts (via WD repeats) with TMEM59; the interaction mediates unconventional autophagic activity of TMEM59. Interacts with TLR2. Interacts (via WD repeats) with MEFV. Interacts (via N-terminal) with CLTC. Interacts with NOD1. Interacts with NOD2. Interacts with TUFM. Interacts with TRIM16. Interacts (via WD repeats) with SPATA33. Interacts with Irgm1. Post-translationally, proteolytic cleavage by activated CASP3 leads to degradation and may regulate autophagy upon cellular stress and apoptotic stimuli. In terms of processing, phosphorylation at Ser-139 promotes association with the ATG12-ATG5 conjugate to form the ATG12-ATG5-ATG16L1 complex. In terms of tissue distribution, widely expressed. Expressed in the testis and sperm midpiece (at protein level). As to expression, expressed in liver. Highly expressed in liver. In terms of tissue distribution, expressed in brain.

The protein resides in the cytoplasm. Its subcellular location is the preautophagosomal structure membrane. It localises to the endosome membrane. It is found in the lysosome membrane. Its function is as follows. Plays an essential role in both canonical and non-canonical autophagy: interacts with ATG12-ATG5 to mediate the lipidation to ATG8 family proteins (MAP1LC3A, MAP1LC3B, MAP1LC3C, GABARAPL1, GABARAPL2 and GABARAP). Acts as a molecular hub, coordinating autophagy pathways via distinct domains that support either canonical or non-canonical signaling. During canonical autophagy, interacts with ATG12-ATG5 to mediate the conjugation of phosphatidylethanolamine (PE) to ATG8 proteins, to produce a membrane-bound activated form of ATG8. Thereby, controls the elongation of the nascent autophagosomal membrane. As part of the ATG8 conjugation system with ATG5 and ATG12, required for recruitment of LRRK2 to stressed lysosomes and induction of LRRK2 kinase activity in response to lysosomal stress. Also involved in non-canonical autophagy, a parallel pathway involving conjugation of ATG8 proteins to single membranes at endolysosomal compartments, probably by catalyzing conjugation of phosphatidylserine (PS) to ATG8. Non-canonical autophagy plays a key role in epithelial cells to limit lethal infection by influenza A (IAV) virus. Regulates mitochondrial antiviral signaling (MAVS)-dependent type I interferon (IFN-I) production. Negatively regulates NOD1- and NOD2-driven inflammatory cytokine response. Instead, promotes an autophagy-dependent antibacterial pathway together with NOD1 or NOD2. Plays a role in regulating morphology and function of Paneth cell. This Mus musculus (Mouse) protein is Autophagy-related protein 16-1.